Here is a 113-residue protein sequence, read N- to C-terminus: Cell cycle protein GpsB (113 aa).

Residues 36–68 (LDMVIKDYSTFTQEIEALQAENIRLVQELDNAP) adopt a coiled-coil conformation.

Belongs to the GpsB family. As to quaternary structure, forms polymers through the coiled coil domains. Interacts with PBP1, MreC and EzrA.

It localises to the cytoplasm. In terms of biological role, divisome component that associates with the complex late in its assembly, after the Z-ring is formed, and is dependent on DivIC and PBP2B for its recruitment to the divisome. Together with EzrA, is a key component of the system that regulates PBP1 localization during cell cycle progression. Its main role could be the removal of PBP1 from the cell pole after pole maturation is completed. Also contributes to the recruitment of PBP1 to the division complex. Not essential for septum formation. The sequence is that of Cell cycle protein GpsB from Listeria welshimeri serovar 6b (strain ATCC 35897 / DSM 20650 / CCUG 15529 / CIP 8149 / NCTC 11857 / SLCC 5334 / V8).